Reading from the N-terminus, the 186-residue chain is Large ribosomal subunit protein uL5 (186 aa).

It belongs to the universal ribosomal protein uL5 family. In terms of assembly, part of the 50S ribosomal subunit; contacts the 5S rRNA and probably tRNA. Forms a bridge to the 30S subunit in the 70S ribosome.

Functionally, this is one of the proteins that bind and probably mediate the attachment of the 5S RNA into the large ribosomal subunit, where it forms part of the central protuberance. In the 70S ribosome it contacts protein S13 of the 30S subunit (bridge B1b), connecting the 2 subunits; this bridge is implicated in subunit movement. May contact the P site tRNA; the 5S rRNA and some of its associated proteins might help stabilize positioning of ribosome-bound tRNAs. This Pyrococcus furiosus (strain ATCC 43587 / DSM 3638 / JCM 8422 / Vc1) protein is Large ribosomal subunit protein uL5.